The following is a 646-amino-acid chain: Threonine--tRNA ligase (646 aa).

A TGS domain is found at 1-63; the sequence is MADLSIIFPD…SSGGSIEIIT (63 aa). The catalytic stretch occupies residues 244–541; the sequence is DHRKLGKELG…LIEEYKGAFP (298 aa). 3 residues coordinate Zn(2+): Cys337, His388, and His518.

The protein belongs to the class-II aminoacyl-tRNA synthetase family. As to quaternary structure, homodimer. Requires Zn(2+) as cofactor.

Its subcellular location is the cytoplasm. It carries out the reaction tRNA(Thr) + L-threonine + ATP = L-threonyl-tRNA(Thr) + AMP + diphosphate + H(+). In terms of biological role, catalyzes the attachment of threonine to tRNA(Thr) in a two-step reaction: L-threonine is first activated by ATP to form Thr-AMP and then transferred to the acceptor end of tRNA(Thr). Also edits incorrectly charged L-seryl-tRNA(Thr). This chain is Threonine--tRNA ligase, found in Oceanobacillus iheyensis (strain DSM 14371 / CIP 107618 / JCM 11309 / KCTC 3954 / HTE831).